Consider the following 129-residue polypeptide: Large ribosomal subunit protein bL12c (129 aa).

Belongs to the bacterial ribosomal protein bL12 family. In terms of assembly, homodimer. Part of the ribosomal stalk of the 50S ribosomal subunit. Forms a multimeric L10(L12)X complex, where L10 forms an elongated spine to which 2 to 4 L12 dimers bind in a sequential fashion. Binds GTP-bound translation factors.

It localises to the plastid. It is found in the chloroplast. Forms part of the ribosomal stalk which helps the ribosome interact with GTP-bound translation factors. Is thus essential for accurate translation. The chain is Large ribosomal subunit protein bL12c from Pyropia yezoensis (Susabi-nori).